Consider the following 91-residue polypeptide: Large ribosomal subunit protein eL43 (91 aa).

The C4-type zinc-finger motif lies at 39-60; sequence CSFCGKDAVRRSSVGIWKCNGC.

It belongs to the eukaryotic ribosomal protein eL43 family.

The protein is Large ribosomal subunit protein eL43 (rpl37A) of Dictyostelium discoideum (Social amoeba).